The following is a 365-amino-acid chain: Cobalt-precorrin-5B C(1)-methyltransferase (365 aa).

This sequence belongs to the CbiD family.

The catalysed reaction is Co-precorrin-5B + S-adenosyl-L-methionine = Co-precorrin-6A + S-adenosyl-L-homocysteine. Its pathway is cofactor biosynthesis; adenosylcobalamin biosynthesis; cob(II)yrinate a,c-diamide from sirohydrochlorin (anaerobic route): step 6/10. Its function is as follows. Catalyzes the methylation of C-1 in cobalt-precorrin-5B to form cobalt-precorrin-6A. The protein is Cobalt-precorrin-5B C(1)-methyltransferase of Methanococcus maripaludis (strain C5 / ATCC BAA-1333).